We begin with the raw amino-acid sequence, 388 residues long: Mannitol-1-phosphate 5-dehydrogenase (388 aa).

5-16 (AVHFGGGNIGRG) contributes to the NAD(+) binding site. Lys213 is a catalytic residue.

This sequence belongs to the mannitol dehydrogenase family. As to quaternary structure, monomer.

The catalysed reaction is D-mannitol 1-phosphate + NAD(+) = beta-D-fructose 6-phosphate + NADH + H(+). In terms of biological role, catalyzes the NAD(H)-dependent interconversion of D-fructose 6-phosphate and D-mannitol 1-phosphate in the mannitol metabolic pathway. This Ajellomyces capsulatus (strain NAm1 / WU24) (Darling's disease fungus) protein is Mannitol-1-phosphate 5-dehydrogenase.